We begin with the raw amino-acid sequence, 20 residues long: Kassinatuerin-2 (20 aa).

Ile-20 is modified (isoleucine amide).

In terms of tissue distribution, expressed by the skin dorsal glands.

It is found in the secreted. Functionally, has no antimicrobial activities against bacteria (E.coli and S.aureus) nor against the fungus C.albicans. This Kassina senegalensis (Senegal running frog) protein is Kassinatuerin-2.